The primary structure comprises 471 residues: Tryptophanase (471 aa).

K5, K115, and K156 each carry N6-acetyllysine. An N6-(pyridoxal phosphate)lysine modification is found at K270. K450 is modified (N6-acetyllysine).

This sequence belongs to the beta-eliminating lyase family. Homotetramer. Pyridoxal 5'-phosphate is required as a cofactor.

It carries out the reaction L-tryptophan + H2O = indole + pyruvate + NH4(+). It participates in amino-acid degradation; L-tryptophan degradation via pyruvate pathway; indole and pyruvate from L-tryptophan: step 1/1. This chain is Tryptophanase, found in Escherichia coli O139:H28 (strain E24377A / ETEC).